We begin with the raw amino-acid sequence, 157 residues long: Ribosome maturation factor RimP (157 aa).

This sequence belongs to the RimP family.

It localises to the cytoplasm. Required for maturation of 30S ribosomal subunits. This chain is Ribosome maturation factor RimP, found in Levilactobacillus brevis (strain ATCC 367 / BCRC 12310 / CIP 105137 / JCM 1170 / LMG 11437 / NCIMB 947 / NCTC 947) (Lactobacillus brevis).